A 97-amino-acid chain; its full sequence is Exodeoxyribonuclease 7 small subunit (97 aa).

The segment at 1 to 22 (MAKTASPGDTAAGNGTEPLPDK) is disordered.

It belongs to the XseB family. As to quaternary structure, heterooligomer composed of large and small subunits.

It localises to the cytoplasm. The enzyme catalyses Exonucleolytic cleavage in either 5'- to 3'- or 3'- to 5'-direction to yield nucleoside 5'-phosphates.. Bidirectionally degrades single-stranded DNA into large acid-insoluble oligonucleotides, which are then degraded further into small acid-soluble oligonucleotides. In Burkholderia vietnamiensis (strain G4 / LMG 22486) (Burkholderia cepacia (strain R1808)), this protein is Exodeoxyribonuclease 7 small subunit.